Reading from the N-terminus, the 787-residue chain is Signal transducer and activator of transcription 5B (787 aa).

A Phosphotyrosine modification is found at tyrosine 90. Position 128 is a phosphoserine (serine 128). The SH2 domain occupies 589 to 686 (WNDGAILGFV…EVYSKYYTPV (98 aa)). Phosphotyrosine is present on tyrosine 682. Tyrosine 699 is modified (phosphotyrosine; by HCK, JAK and PTK6).

It belongs to the transcription factor STAT family. As to quaternary structure, upon activation, forms a homodimer or a heterodimer with a related family member. Binds NR3C1. Interacts with NCOA1. Interacts with NMI. Interacts with SOCS7. Interacts (via SH2 domain) with INSR. Interacts with CPEB3; this inhibits STAT5B-mediated transcriptional activation. Tyrosine phosphorylated in response to signaling via activated KIT, resulting in translocation to the nucleus. Tyrosine phosphorylated in response to signaling via activated FLT3; wild-type FLT3 results in much weaker phosphorylation than constitutively activated mutant FLT3. Alternatively, can be phosphorylated by JAK2. Phosphorylation at Tyr-699 by PTK6 or HCK leads to an increase of its transcriptional activity.

The protein localises to the cytoplasm. It localises to the nucleus. In terms of biological role, carries out a dual function: signal transduction and activation of transcription. Mediates cellular responses to the cytokine KITLG/SCF and other growth factors. Binds to the GAS element and activates PRL-induced transcription. Positively regulates hematopoietic/erythroid differentiation. The polypeptide is Signal transducer and activator of transcription 5B (STAT5B) (Sus scrofa (Pig)).